Consider the following 486-residue polypeptide: Glutamyl-tRNA(Gln) amidotransferase subunit A (486 aa).

Catalysis depends on charge relay system residues Lys78 and Ser153. Ser177 acts as the Acyl-ester intermediate in catalysis.

It belongs to the amidase family. GatA subfamily. In terms of assembly, heterotrimer of A, B and C subunits.

It catalyses the reaction L-glutamyl-tRNA(Gln) + L-glutamine + ATP + H2O = L-glutaminyl-tRNA(Gln) + L-glutamate + ADP + phosphate + H(+). Functionally, allows the formation of correctly charged Gln-tRNA(Gln) through the transamidation of misacylated Glu-tRNA(Gln) in organisms which lack glutaminyl-tRNA synthetase. The reaction takes place in the presence of glutamine and ATP through an activated gamma-phospho-Glu-tRNA(Gln). This chain is Glutamyl-tRNA(Gln) amidotransferase subunit A, found in Ruminiclostridium cellulolyticum (strain ATCC 35319 / DSM 5812 / JCM 6584 / H10) (Clostridium cellulolyticum).